Consider the following 288-residue polypeptide: Cyclin-dependent kinase 2 homolog (288 aa).

A Protein kinase domain is found at Tyr4–Phe284. ATP contacts are provided by residues Ile10–Val18 and Lys32. The residue at position 14 (Thr14) is a Phosphothreonine. Phosphotyrosine is present on Tyr15. Residue Asp125 is the Proton acceptor of the active site. Thr158 carries the phosphothreonine modification.

The protein belongs to the protein kinase superfamily. CMGC Ser/Thr protein kinase family. CDC2/CDKX subfamily. In terms of assembly, may form a complex composed of at least the catalytic subunit CRK2 and a cyclin. The cofactor is Mg(2+). In terms of processing, autophosphorylates in presence of cyclin cyc-1 but not in presence of cyclin cyc-3.

The protein resides in the cytoplasm. The enzyme catalyses L-seryl-[protein] + ATP = O-phospho-L-seryl-[protein] + ADP + H(+). It carries out the reaction L-threonyl-[protein] + ATP = O-phospho-L-threonyl-[protein] + ADP + H(+). It catalyses the reaction [DNA-directed RNA polymerase] + ATP = phospho-[DNA-directed RNA polymerase] + ADP + H(+). Its activity is regulated as follows. Phosphorylation at Thr-14 or Tyr-15 inactivates the enzyme, while phosphorylation at Thr-158 activates it. Activated by cyclin cyc-1 in vitro. Activated by cyclin cyc-3 in vitro. In terms of biological role, serine/threonine-protein kinase. Involved in the control of the cell cycle. Required for entry into S-phase and mitosis. Probable component of the kinase complex that phosphorylates the repetitive C-terminus of RNA polymerase II. In schizonts, phosphorylates ORC1 resulting in its dissociation from DNA, relocalization to the cytoplasm and likely its degradation. The protein is Cyclin-dependent kinase 2 homolog of Plasmodium falciparum (isolate 3D7).